The primary structure comprises 458 residues: Argininosuccinate lyase (458 aa).

This sequence belongs to the lyase 1 family. Argininosuccinate lyase subfamily.

The protein resides in the cytoplasm. It catalyses the reaction 2-(N(omega)-L-arginino)succinate = fumarate + L-arginine. The protein operates within amino-acid biosynthesis; L-arginine biosynthesis; L-arginine from L-ornithine and carbamoyl phosphate: step 3/3. This is Argininosuccinate lyase from Acetivibrio thermocellus (strain ATCC 27405 / DSM 1237 / JCM 9322 / NBRC 103400 / NCIMB 10682 / NRRL B-4536 / VPI 7372) (Clostridium thermocellum).